We begin with the raw amino-acid sequence, 228 residues long: Elongation factor 1-beta (228 aa).

The segment at 74–116 is disordered; it reads ASKAFTAYGPEGSEASANPKDKPAEEEEEEDLFASDSEDEDPA. The tract at residues 84-93 is igE-binding; it reads EGSEASANPK. Residues 97-115 are compositionally biased toward acidic residues; that stretch reads AEEEEEEDLFASDSEDEDP.

It belongs to the EF-1-beta/EF-1-delta family. In terms of assembly, EF-1 is composed of 4 subunits: alpha, beta, delta, and gamma.

EF-1-beta and EF-1-delta stimulate the exchange of GDP bound to EF-1-alpha to GTP. The chain is Elongation factor 1-beta from Penicillium citrinum.